Here is a 291-residue protein sequence, read N- to C-terminus: ATP synthase gamma chain (291 aa).

This sequence belongs to the ATPase gamma chain family. As to quaternary structure, F-type ATPases have 2 components, CF(1) - the catalytic core - and CF(0) - the membrane proton channel. CF(1) has five subunits: alpha(3), beta(3), gamma(1), delta(1), epsilon(1). CF(0) has three main subunits: a, b and c.

The protein localises to the cell inner membrane. In terms of biological role, produces ATP from ADP in the presence of a proton gradient across the membrane. The gamma chain is believed to be important in regulating ATPase activity and the flow of protons through the CF(0) complex. The chain is ATP synthase gamma chain from Aquifex aeolicus (strain VF5).